The following is a 330-amino-acid chain: 5-dehydro-2-deoxygluconokinase (330 aa).

This sequence belongs to the carbohydrate kinase PfkB family.

It catalyses the reaction 5-dehydro-2-deoxy-D-gluconate + ATP = 6-phospho-5-dehydro-2-deoxy-D-gluconate + ADP + H(+). It functions in the pathway polyol metabolism; myo-inositol degradation into acetyl-CoA; acetyl-CoA from myo-inositol: step 5/7. In terms of biological role, catalyzes the phosphorylation of 5-dehydro-2-deoxy-D-gluconate (2-deoxy-5-keto-D-gluconate or DKG) to 6-phospho-5-dehydro-2-deoxy-D-gluconate (DKGP). The protein is 5-dehydro-2-deoxygluconokinase of Bacillus velezensis (strain DSM 23117 / BGSC 10A6 / LMG 26770 / FZB42) (Bacillus amyloliquefaciens subsp. plantarum).